Reading from the N-terminus, the 348-residue chain is GTPase Obg 1 (348 aa).

The Obg domain maps to 1–159; that stretch reads MSFVDEAKIH…HCVLLKLKIV (159 aa). Residues 160–329 form the OBG-type G domain; that stretch reads SDVGIIGMPN…LHAQVKKAVV (170 aa). GTP is bound by residues 166–173, 191–195, 212–215, 279–282, and 310–312; these read GMPNAGKS, FTTLE, DIPG, NKCD, and GDE. Positions 173 and 193 each coordinate Mg(2+).

Belongs to the TRAFAC class OBG-HflX-like GTPase superfamily. OBG GTPase family. As to quaternary structure, monomer. It depends on Mg(2+) as a cofactor.

Its subcellular location is the cytoplasm. An essential GTPase which binds GTP, GDP and possibly (p)ppGpp with moderate affinity, with high nucleotide exchange rates and a fairly low GTP hydrolysis rate. Plays a role in control of the cell cycle, stress response, ribosome biogenesis and in those bacteria that undergo differentiation, in morphogenesis control. The sequence is that of GTPase Obg 1 from Anaplasma marginale (strain Florida).